The chain runs to 183 residues: ATP synthase subunit delta (183 aa).

Belongs to the ATPase delta chain family. As to quaternary structure, F-type ATPases have 2 components, F(1) - the catalytic core - and F(0) - the membrane proton channel. F(1) has five subunits: alpha(3), beta(3), gamma(1), delta(1), epsilon(1). F(0) has three main subunits: a(1), b(2) and c(10-14). The alpha and beta chains form an alternating ring which encloses part of the gamma chain. F(1) is attached to F(0) by a central stalk formed by the gamma and epsilon chains, while a peripheral stalk is formed by the delta and b chains.

The protein localises to the cell membrane. In terms of biological role, f(1)F(0) ATP synthase produces ATP from ADP in the presence of a proton or sodium gradient. F-type ATPases consist of two structural domains, F(1) containing the extramembraneous catalytic core and F(0) containing the membrane proton channel, linked together by a central stalk and a peripheral stalk. During catalysis, ATP synthesis in the catalytic domain of F(1) is coupled via a rotary mechanism of the central stalk subunits to proton translocation. Its function is as follows. This protein is part of the stalk that links CF(0) to CF(1). It either transmits conformational changes from CF(0) to CF(1) or is implicated in proton conduction. The chain is ATP synthase subunit delta from Halalkalibacterium halodurans (strain ATCC BAA-125 / DSM 18197 / FERM 7344 / JCM 9153 / C-125) (Bacillus halodurans).